The sequence spans 727 residues: Glucans biosynthesis glucosyltransferase H (727 aa).

Residues Ser-18–Glu-38 are disordered. The next 7 helical transmembrane spans lie at Phe-58 to Val-78, Val-97 to Leu-117, Leu-278 to Val-298, Ile-408 to Ala-428, Leu-460 to Leu-480, Ile-496 to Ile-516, and Leu-572 to Trp-592.

The protein belongs to the glycosyltransferase 2 family. OpgH subfamily.

The protein localises to the cell inner membrane. It participates in glycan metabolism; osmoregulated periplasmic glucan (OPG) biosynthesis. Its function is as follows. Involved in the biosynthesis of osmoregulated periplasmic glucans (OPGs). The protein is Glucans biosynthesis glucosyltransferase H of Shewanella baltica (strain OS185).